The sequence spans 212 residues: Calaxin (212 aa).

3 consecutive EF-hand domains span residues 65–100, 101–136, and 146–181; these read TDDM…FLRG, TLDE…SLLK, and GIKD…ENLL. Positions 78, 80, 82, 84, 89, 114, 116, 118, 125, 159, 161, 163, 165, and 170 each coordinate Ca(2+).

As to quaternary structure, component of the outer dynein arm-docking complex along with ODAD1, ODAD2, ODAD3 and ODAD4.

It is found in the cytoplasm. The protein localises to the cytoskeleton. It localises to the cilium axoneme. The protein resides in the cell projection. Its subcellular location is the cilium. It is found in the flagellum. Functionally, component of the outer dynein arm-docking complex (ODA-DC) that mediates outer dynein arms (ODA) binding onto the doublet microtubule. Seems to regulate the assembly of both ODAs and their axonemal docking complex onto ciliary microtubules. Regulates ciliary and flagellar motility and is required for cilia-driven determination of body laterality. This is Calaxin (Clxn) from Mus musculus (Mouse).